Here is a 132-residue protein sequence, read N- to C-terminus: Histone H2A (132 aa).

Gly residues predominate over residues 1–10 (MTGGKSGGKA). Positions 1–24 (MTGGKSGGKASGSKNAQSRSSKAG) are disordered. 2 positions are modified to N6-acetyllysine: Lys-5 and Lys-9. Gln-106 bears the N5-methylglutamine mark. Ser-129 carries the post-translational modification Phosphoserine. The short motif at 129–130 (SQ) is the [ST]-Q motif element.

The protein belongs to the histone H2A family. In terms of assembly, the nucleosome is a histone octamer containing two molecules each of H2A, H2B, H3 and H4 assembled in one H3-H4 heterotetramer and two H2A-H2B heterodimers. The octamer wraps approximately 147 bp of DNA. Phosphorylated to form H2AS128ph (gamma-H2A) in response to DNA double-strand breaks (DSBs) generated by exogenous genotoxic agents and by stalled replication forks. Phosphorylation is dependent on the DNA damage checkpoint kinases mec1/ATR and tel1/ATM, spreads on either side of a detected DSB site and may mark the surrounding chromatin for recruitment of proteins required for DNA damage signaling and repair. Gamma-H2A is removed from the DNA prior to the strand invasion-primer extension step of the repair process and subsequently dephosphorylated. Dephosphorylation is necessary for efficient recovery from the DNA damage checkpoint. In terms of processing, acetylated by esa1 to form H2AK4ac and H2AK7ac.

It is found in the nucleus. The protein localises to the chromosome. Functionally, core component of nucleosome which plays a central role in DNA double strand break (DSB) repair. Nucleosomes wrap and compact DNA into chromatin, limiting DNA accessibility to the cellular machineries which require DNA as a template. Histones thereby play a central role in transcription regulation, DNA repair, DNA replication and chromosomal stability. DNA accessibility is regulated via a complex set of post-translational modifications of histones, also called histone code, and nucleosome remodeling. The polypeptide is Histone H2A (htaA) (Emericella nidulans (strain FGSC A4 / ATCC 38163 / CBS 112.46 / NRRL 194 / M139) (Aspergillus nidulans)).